The primary structure comprises 353 residues: Uroporphyrinogen decarboxylase (353 aa).

Residues 28 to 32 (RQAGR), D78, Y155, S210, and H325 each bind substrate.

It belongs to the uroporphyrinogen decarboxylase family. As to quaternary structure, homodimer.

It is found in the cytoplasm. The catalysed reaction is uroporphyrinogen III + 4 H(+) = coproporphyrinogen III + 4 CO2. It functions in the pathway porphyrin-containing compound metabolism; protoporphyrin-IX biosynthesis; coproporphyrinogen-III from 5-aminolevulinate: step 4/4. Functionally, catalyzes the decarboxylation of four acetate groups of uroporphyrinogen-III to yield coproporphyrinogen-III. The polypeptide is Uroporphyrinogen decarboxylase (Nostoc punctiforme (strain ATCC 29133 / PCC 73102)).